The primary structure comprises 536 residues: Signal peptide peptidase-like 5 (536 aa).

A signal peptide spans 1-29 (MSLPPFTCRLLAAAAALYLIGLLCVGADT). At 30–186 (KDVTAPKIPG…VELLLYAPKS (157 aa)) the chain is on the lumenal side. The region spanning 94–170 (SNLTSKLSWS…TSSGDALKKS (77 aa)) is the PA domain. N-linked (GlcNAc...) asparagine glycans are attached at residues N95 and N151. A helical membrane pass occupies residues 187 to 207 (PIVDYAVVFLWLMSVGTVFVA). Residues 208-243 (SVWSHVTSPKKNDEQYDELSPKKSSNVDATKGGAEE) are Cytoplasmic-facing. The tract at residues 218–238 (KNDEQYDELSPKKSSNVDATK) is disordered. The helical transmembrane segment at 244–264 (ETLDISAMGAVIFVISASTFL) threads the bilayer. Over 265–273 (VLLFFFMSS) the chain is Lumenal. The helical transmembrane segment at 274–296 (WFILILTIFFVIGGMQGMHNINV) threads the bilayer. Over 297–318 (TLITRRCSKCGQKNLKLPLLGN) the chain is Cytoplasmic. The helical transmembrane segment at 319–339 (TSILSLVVLLFCFVVAILWFM) threads the bilayer. The Lumenal portion of the chain corresponds to 340 to 344 (NRKTS). The helical transmembrane segment at 345–365 (HAWAGQDIFGICMMINVLQVA) threads the bilayer. The Cytoplasmic segment spans residues 366 to 374 (RLPNIRVAT). Residues 375–395 (ILLCCAFFYDIFWVFISPLIF) form a helical membrane-spanning segment. Residue D384 is part of the active site. Over 396–428 (KQSVMIAVARGSKDTGESIPMLLRIPRLSDPWG) the chain is Lumenal. A helical transmembrane segment spans residues 429 to 449 (GYNMIGFGDILFPGLLICFIF). D437 is an active-site residue. Residues 450–463 (RFDKENNKGVSNGY) lie on the Cytoplasmic side of the membrane. Residues 464–484 (FPWLMFGYGLGLFLTYLGLYV) traverse the membrane as a helical segment. At 485–489 (MNGHG) the chain is on the lumenal side. Residues 490–510 (QPALLYLVPCTLGITVILGLV) traverse the membrane as a helical segment. A PAL motif is present at residues 491-493 (PAL). The Cytoplasmic portion of the chain corresponds to 511 to 536 (RKELRDLWNYGTQQPSAADVNPSPEA).

It belongs to the peptidase A22B family. In terms of processing, glycosylated.

It localises to the endosome membrane. Its function is as follows. Intramembrane-cleaving aspartic protease (I-CLiP) that cleaves type II membrane signal peptides in the hydrophobic plane of the membrane. The protein is Signal peptide peptidase-like 5 (SPPL5) of Arabidopsis thaliana (Mouse-ear cress).